A 72-amino-acid chain; its full sequence is Translation initiation factor IF-1 (72 aa).

The 72-residue stretch at 1 to 72 (MSKEELLEFP…TKGRITYRFK (72 aa)) folds into the S1-like domain.

It belongs to the IF-1 family. As to quaternary structure, component of the 30S ribosomal translation pre-initiation complex which assembles on the 30S ribosome in the order IF-2 and IF-3, IF-1 and N-formylmethionyl-tRNA(fMet); mRNA recruitment can occur at any time during PIC assembly.

It localises to the cytoplasm. Its function is as follows. One of the essential components for the initiation of protein synthesis. Stabilizes the binding of IF-2 and IF-3 on the 30S subunit to which N-formylmethionyl-tRNA(fMet) subsequently binds. Helps modulate mRNA selection, yielding the 30S pre-initiation complex (PIC). Upon addition of the 50S ribosomal subunit IF-1, IF-2 and IF-3 are released leaving the mature 70S translation initiation complex. The protein is Translation initiation factor IF-1 of Parvibaculum lavamentivorans (strain DS-1 / DSM 13023 / NCIMB 13966).